The sequence spans 171 residues: UPF0398 protein MGAS9429_Spy1349 (171 aa).

The protein belongs to the UPF0398 family.

The protein is UPF0398 protein MGAS9429_Spy1349 of Streptococcus pyogenes serotype M12 (strain MGAS9429).